The following is a 581-amino-acid chain: Prolactin receptor (581 aa).

The N-terminal stretch at 1–24 (MKENAASRVVFILLLFLSVSLLNG) is a signal peptide. Residues 25–237 (QSPPEKPKLV…NDFPVKDTSM (213 aa)) are Extracellular-facing. Fibronectin type-III domains lie at 27–127 (PPEK…IVEP) and 129–229 (PPAN…IPND). Cysteines 36 and 46 form a disulfide. N59 is a glycosylation site (N-linked (GlcNAc...) asparagine). A disulfide bridge connects residues C75 and C86. N132 carries N-linked (GlcNAc...) asparagine glycosylation. Zn(2+) is bound by residues D211 and H212. Residues 215–219 (WSEWS) carry the WSXWS motif motif. A helical membrane pass occupies residues 238-258 (WIFVAILSAVICLIMVWAVAL). At 259-581 (KGYSMVTCIL…PAKKAPPALP (323 aa)) the chain is on the cytoplasmic side. A Box 1 motif motif is present at residues 267-275 (ILPPVPGPK). Disordered regions lie at residues 324 to 384 (QLMP…EKLE) and 458 to 499 (DQHA…PRPQ). Composition is skewed to basic and acidic residues over residues 329–349 (PSKE…DSDS), 375–384 (HTPEGPEKLE), and 469–483 (ETGR…RESE).

This sequence belongs to the type I cytokine receptor family. Type 1 subfamily. Interacts with SMARCA1. Interacts with NEK3 and VAV2 and this interaction is prolactin-dependent. In terms of tissue distribution, expressed in all tissues examined; liver, peripheral blood lymphocytes, endometrium, corpus luteum, intestine, fetal thymus, fetal spleen, fetal liver and fetal brain.

It localises to the membrane. In terms of biological role, this is a receptor for the anterior pituitary hormone prolactin. In Bos taurus (Bovine), this protein is Prolactin receptor (PRLR).